Consider the following 158-residue polypeptide: Disease resistance response protein DRRG49-C (158 aa).

The protein belongs to the BetVI family.

The polypeptide is Disease resistance response protein DRRG49-C (Pisum sativum (Garden pea)).